The sequence spans 751 residues: Semaphorin-3C (751 aa).

The N-terminal stretch at 1 to 21 is a signal peptide; that stretch reads MAFRTICVLVGVFICSICVKG. The 484-residue stretch at 28-511 folds into the Sema domain; that stretch reads RVYLTFDELR…SNEGVSQVSL (484 aa). N-linked (GlcNAc...) asparagine glycosylation occurs at Asn81. Cysteines 101 and 112 form a disulfide. Asn123 carries N-linked (GlcNAc...) asparagine glycosylation. A disulfide bond links Cys130 and Cys139. Residues Asn252 and Asn268 are each glycosylated (N-linked (GlcNAc...) asparagine). Disulfide bonds link Cys266/Cys378 and Cys290/Cys338. An N-linked (GlcNAc...) asparagine glycan is attached at Asn465. Cys514 and Cys532 are joined by a disulfide. In terms of domain architecture, Ig-like C2-type spans 571-655; it reads AYRNAAEIVQ…TENSFKQTIA (85 aa). N-linked (GlcNAc...) asparagine glycosylation is found at Asn585 and Asn586. A disulfide bridge connects residues Cys592 and Cys643. Positions 712–731 are enriched in basic and acidic residues; sequence TRQQHQQGDESQKMRGDYGK. The interval 712–751 is disordered; the sequence is TRQQHQQGDESQKMRGDYGKLKALINSRKSRNRRNQLPES.

The protein belongs to the semaphorin family. As to quaternary structure, interacts with PLXND1.

The protein resides in the secreted. Functionally, binds to plexin family members and plays an important role in the regulation of developmental processes. Required for normal cardiovascular development during embryogenesis. Functions as attractant for growing axons, and thereby plays an important role in axon growth and axon guidance. In Pongo abelii (Sumatran orangutan), this protein is Semaphorin-3C (SEMA3C).